Consider the following 254-residue polypeptide: Receptor expression-enhancing protein 3 (254 aa).

3 consecutive transmembrane segments (helical) span residues 1-21 (MVSWMISRAVVLVFGMLYPAY), 35-55 (YVRWMMYWIVFALYTVIETVA), and 59-79 (LAWFPLYYELKIAFVIWLLSP). Residues 162–232 (DEPVGHRPYQ…QSMKSVKTIK (71 aa)) form a disordered region. The segment covering 198–212 (EQTDEEAEGPFSDDE) has biased composition (acidic residues). Thr-200 carries the post-translational modification Phosphothreonine. Ser-209 is subject to Phosphoserine.

The protein belongs to the DP1 family.

The protein resides in the endoplasmic reticulum membrane. Functionally, microtubule-binding protein required to ensure proper cell division and nuclear envelope reassembly by sequestering the endoplasmic reticulum away from chromosomes during mitosis. Probably acts by clearing the endoplasmic reticulum membrane from metaphase chromosomes. The protein is Receptor expression-enhancing protein 3 (Reep3) of Mus musculus (Mouse).